A 333-amino-acid polypeptide reads, in one-letter code: Nucleoid-associated protein PSPPH_1145 (333 aa).

Belongs to the YejK family.

It localises to the cytoplasm. The protein localises to the nucleoid. The protein is Nucleoid-associated protein PSPPH_1145 of Pseudomonas savastanoi pv. phaseolicola (strain 1448A / Race 6) (Pseudomonas syringae pv. phaseolicola (strain 1448A / Race 6)).